Reading from the N-terminus, the 282-residue chain is E3 ubiquitin-protein ligase SIAH1 (282 aa).

A compositionally biased stretch (polar residues) spans 1–17 (MSRQTATALPTGTSKCP). A disordered region spans residues 1 to 22 (MSRQTATALPTGTSKCPPSQRV). Ser-19 carries the phosphoserine; by ATM and ATR modification. The RING-type zinc-finger motif lies at 41-76 (CPVCFDYVLPPILQCQSGHLVCSNCRPKLTCCPTCR). The SBD stretch occupies residues 90–282 (VANSVLFPCK…LGINVTISMC (193 aa)). An SIAH-type zinc finger spans residues 93-153 (SVLFPCKYAS…VMPHLMHQHK (61 aa)). Residues Cys-98, Cys-105, His-117, Cys-121, Cys-128, Cys-135, His-147, and His-152 each coordinate Zn(2+).

It belongs to the SINA (Seven in absentia) family. Homodimer. Interacts with group 1 glutamate receptors GRM1 and GRM5. Interacts with DAB1, which may inhibit its activity. Interacts with UBE2E2. Interacts with PEG3. Interacts with GAPDH; leading to stabilize SIAH1. Component of some large E3 complex composed of UBE2D1, SIAH1, CACYBP/SIP, SKP1, APC and TBL1X. Interacts with UBE2I. Interacts with alpha-tubulin. Interacts with PEG10, which may inhibit its activity. Interacts with KHDRBS3. Interacts with SNCAIP. Interacts with HIPK2; the interaction is promoted by DAZAP2 and results in SIAH1-mediated ubiquitination and subsequent proteasomal degradation of HIPK2. Interacts with DAZAP2; the interaction is decreased following phosphorylation of DAZAP2 by HIPK2. Interacts with Bassoon/BSN and Piccolo/PLCO; these interactions negatively regulate SIAH1 E3 ligase activity. Interacts with DCC. Interacts with AXIN1; catalyzes AXIN1 ubiquitination and subsequent proteasome-mediated ubiquitin-dependent degradation. In terms of processing, phosphorylated on Ser-19 by ATM and ATR. This phosphorylation disrupts SIAH1 interaction with HIPK2, and subsequent proteasomal degradation of HIPK2. Widely expressed at a low level. Down-regulated in advanced hepatocellular carcinomas.

The protein localises to the cytoplasm. The protein resides in the nucleus. It catalyses the reaction S-ubiquitinyl-[E2 ubiquitin-conjugating enzyme]-L-cysteine + [acceptor protein]-L-lysine = [E2 ubiquitin-conjugating enzyme]-L-cysteine + N(6)-ubiquitinyl-[acceptor protein]-L-lysine.. The protein operates within protein modification; protein ubiquitination. With respect to regulation, inhibited by interaction with SNCAIP (isoform 2, but not isoform 1). May be inhibited by interaction with PEG10. Its function is as follows. E3 ubiquitin-protein ligase that mediates ubiquitination and subsequent proteasomal degradation of target proteins. E3 ubiquitin ligases accept ubiquitin from an E2 ubiquitin-conjugating enzyme in the form of a thioester and then directly transfers the ubiquitin to targeted substrates. Mediates E3 ubiquitin ligase activity either through direct binding to substrates or by functioning as the essential RING domain subunit of larger E3 complexes. Triggers the ubiquitin-mediated degradation of many substrates, including proteins involved in transcription regulation (ELL2, MYB, POU2AF1, PML and RBBP8), a cell surface receptor (DCC), the cell-surface receptor-type tyrosine kinase FLT3, the cytoplasmic signal transduction molecules (KLF10/TIEG1 and NUMB), an antiapoptotic protein (BAG1), a microtubule motor protein (KIF22), a protein involved in synaptic vesicle function in neurons (SYP), a structural protein (CTNNB1) and SNCAIP. Confers constitutive instability to HIPK2 through proteasomal degradation. It is thereby involved in many cellular processes such as apoptosis, tumor suppression, cell cycle, axon guidance, transcription regulation, spermatogenesis and TNF-alpha signaling. Has some overlapping function with SIAH2. Induces apoptosis in cooperation with PEG3. Upon nitric oxid (NO) generation that follows apoptotic stimulation, interacts with S-nitrosylated GAPDH, mediating the translocation of GAPDH to the nucleus. GAPDH acts as a stabilizer of SIAH1, facilitating the degradation of nuclear proteins. Mediates ubiquitination and degradation of EGLN2 and EGLN3 in response to the unfolded protein response (UPR), leading to their degradation and subsequent stabilization of ATF4. Also part of the Wnt signaling pathway in which it mediates the Wnt-induced ubiquitin-mediated proteasomal degradation of AXIN1. This chain is E3 ubiquitin-protein ligase SIAH1 (SIAH1), found in Homo sapiens (Human).